Consider the following 203-residue polypeptide: Outer-membrane lipoprotein carrier protein (203 aa).

A signal peptide spans Met-1 to Ala-21.

This sequence belongs to the LolA family. As to quaternary structure, monomer.

It is found in the periplasm. Participates in the translocation of lipoproteins from the inner membrane to the outer membrane. Only forms a complex with a lipoprotein if the residue after the N-terminal Cys is not an aspartate (The Asp acts as a targeting signal to indicate that the lipoprotein should stay in the inner membrane). The sequence is that of Outer-membrane lipoprotein carrier protein from Sodalis glossinidius (strain morsitans).